The primary structure comprises 318 residues: Protein disulfide-isomerase MPD1 (318 aa).

The first 21 residues, 1-21, serve as a signal peptide directing secretion; it reads MLFLNIIKLLLGLFIMNEVKA. In terms of domain architecture, Thioredoxin spans 22 to 158; sequence QNFYDSDPHI…SLSRIRSYVK (137 aa). An N-linked (GlcNAc...) asparagine glycan is attached at Asn47. Cys59 and Cys62 form a disulfide bridge. A glycan (N-linked (GlcNAc...) asparagine) is linked at Asn307. The Prevents secretion from ER motif lies at 315 to 318; sequence HDEL.

The protein belongs to the protein disulfide isomerase family. Interacts with CNE1 and EPS1.

It is found in the endoplasmic reticulum lumen. The enzyme catalyses Catalyzes the rearrangement of -S-S- bonds in proteins.. Participates in the folding of proteins containing disulfide bonds. The chain is Protein disulfide-isomerase MPD1 (MPD1) from Saccharomyces cerevisiae (strain ATCC 204508 / S288c) (Baker's yeast).